The chain runs to 91 residues: Teretoxin Tan22.13 (91 aa).

A signal peptide spans 1 to 21 (MKVQILFALMMVLVTLCLGQK). Residues 22–24 (MQR) constitute a propeptide that is removed on maturation.

The protein belongs to the teretoxin C (TC) superfamily. Post-translationally, contains 4 disulfide bonds. As to expression, expressed by the venom duct.

It localises to the secreted. This Terebra anilis (Auger snail) protein is Teretoxin Tan22.13.